A 596-amino-acid polypeptide reads, in one-letter code: Meiosis-specific protein ASY1 (596 aa).

The HORMA domain occupies 15-228; the sequence is QDSLLLTRNL…SKHLVLTLKV (214 aa). The disordered stretch occupies residues 235–303; the sequence is CEDENDDMQD…NTQDPAENEQ (69 aa). A compositionally biased stretch (acidic residues) spans 282–295; sequence QDDDDGEVDEDDNT. Residues 351–449 enclose the SWIRM domain; sequence SKTGKDMYIK…ASSNRRLGKR (99 aa). Residues 562-596 form a disordered region; the sequence is TVNCSQASQDRRGRKTSMVREPILQYSKRQKSQAN.

In terms of assembly, interacts with ASY3.

It localises to the chromosome. The protein resides in the nucleus. Functionally, required for normal meiosis in male and female gametophytes. Plays a crucial role in coordinating the activity of DMC1, a key member of the homologous recombination machinery. Acts at the interface between the developing chromosome axes and the recombination machinery to ensure DMC1-mediated interhomolog recombination. The protein is Meiosis-specific protein ASY1 of Arabidopsis thaliana (Mouse-ear cress).